The primary structure comprises 468 residues: Beta-monoglucosyldiacylglycerol synthase (468 aa).

A run of 4 helical transmembrane segments spans residues A51–G71, S72–A92, M358–M378, and M387–L407.

The protein belongs to the glycosyltransferase 2 family. The cofactor is Mg(2+).

Its subcellular location is the membrane. The enzyme catalyses a 1,2-diacyl-sn-glycerol + UDP-alpha-D-glucose = a 1,2-diacyl-3-O-(beta-D-glucopyranosyl)-sn-glycerol + UDP + H(+). Its function is as follows. Glucosyltransferase involved in the biosynthesis of the non-bilayer-forming membrane lipid beta-monoglucosyldiacylglycerol which contributes to regulate the properties and stability of the membrane. Catalyzes the transfer of a glucosyl residue from UDP-Glc to diacylglycerol (DAG) acceptor to form the corresponding beta-glucosyl-DAG (1,2-diacyl-3-O-(beta-D-glucopyranosyl)-sn-glycerol). It can only use UDP-Glc as sugar donor. Two types of DAG (dipalmitoyl-DAG (DPDAG) and 1-oleoyl-2-palmitoyl-DAG (OPDAG)) can be used as sugar acceptors, but OPDAG is preferred. The chain is Beta-monoglucosyldiacylglycerol synthase from Nostoc sp. (strain PCC 7120 / SAG 25.82 / UTEX 2576).